Consider the following 257-residue polypeptide: Type I iodothyronine deiodinase (257 aa).

The Extracellular segment spans residues 1-12; it reads MGLPGLGLLLKR. Residues 13–33 traverse the membrane as a helical; Signal-anchor for type III membrane protein segment; the sequence is FGVLVRVALKVAVGKVLLTLW. At 34 to 257 the chain is on the cytoplasmic side; sequence PSAIRPHLLA…CRSSAQSPRL (224 aa). Selenocysteine 126 is an active-site residue. A non-standard amino acid (selenocysteine) is located at residue selenocysteine 126.

The protein belongs to the iodothyronine deiodinase family. As to quaternary structure, predominantly monomer. Can form homodimers but homodimerization is not essential for enzyme activity. In terms of tissue distribution, liver specific.

It is found in the cell membrane. Its subcellular location is the endoplasmic reticulum membrane. The protein resides in the basolateral cell membrane. It carries out the reaction 3,3',5-triiodo-L-thyronine + iodide + A + H(+) = L-thyroxine + AH2. The enzyme catalyses 3,3',5'-triiodo-L-thyronine + iodide + A + H(+) = L-thyroxine + AH2. The catalysed reaction is 3,3'-diiodo-L-thyronine + iodide + A + H(+) = 3,3',5'-triiodo-L-thyronine + AH2. It catalyses the reaction 3,3'-diiodo-L-thyronine + iodide + A + H(+) = 3,3',5-triiodo-L-thyronine + AH2. It carries out the reaction 3'-iodo-L-thyronine + iodide + A + H(+) = 3',5'-diiodo-L-thyronine + AH2. The enzyme catalyses 3-iodo-L-thyronine + iodide + A + H(+) = 3,5-diiodo-L-thyronine + AH2. The catalysed reaction is 3-iodo-L-thyronine + iodide + A + H(+) = 3,3'-diiodo-L-thyronine + AH2. It catalyses the reaction 3,3'-diiodothyronamine + iodide + A + H(+) = 3,3',5'-triiodothyronamine + AH2. It carries out the reaction 3'-iodothyronamine + iodide + A + H(+) = 3',5'-diiodothyronamine + AH2. The enzyme catalyses 3-iodothyronamine + iodide + A + H(+) = 3,3'-diiodothyronamine + AH2. The catalysed reaction is 3,3'-diiodothyronamine + iodide + A + H(+) = 3,3',5-triiodothyronamine + AH2. It catalyses the reaction 3-iodothyronamine + iodide + A + H(+) = 3,5-diiodothyronamine + AH2. It carries out the reaction 3,3'-diiodo-L-thyronine sulfate + iodide + A + H(+) = 3,3',5'-triiodo-L-thyronine sulfate + AH2. The enzyme catalyses 3,3',5'-triiodo-L-thyronine sulfate + iodide + A + H(+) = L-thyroxine sulfate + AH2. The catalysed reaction is 3,3'-diiodo-L-thyronine sulfate + iodide + A + H(+) = 3,3',5-triiodo-L-thyronine sulfate + AH2. Plays a crucial role in the metabolism of thyroid hormones (TH) and has specific roles in TH activation and inactivation by deiodination. Catalyzes the deiodination of L-thyroxine (T4) to 3,5,3'-triiodothyronine (T3) and 3',5'-diiodothyronine (3',5'-T2) to 3'-monoiodothyronine (3'-T1) via outer-ring deiodination (ORD). Catalyzes the deiodination of T4 to 3,3',5'-triiodothyronine (rT3), T3 to 3,3'-diiodothyronine (3,3'-T2), 3,5-diiodothyronine (3,5-T2) to 3-monoiodothyronine (3-T1) and 3,3'-T2 to 3-T1 via inner-ring deiodination (IRD). Catalyzes the deiodination of rT3 to 3,3'-T2 via ORD. Catalyzes the phenolic ring deiodinations of 3,3',5'-triiodothyronamine, 3',5'-diiodothyronamine and 3,3'-diiodothyronamine as well as tyrosyl ring deiodinations of 3,5,3'-triiodothyronamine and 3,5-diiodothyronamine. Catalyzes the deiodination of L-thyroxine sulfate and 3,3',5-triiodo-L-thyronine sulfate via IRD and of 3,3',5'-triiodo-L-thyronine sulfate via ORD. This chain is Type I iodothyronine deiodinase (DIO1), found in Suncus murinus (Asian house shrew).